Consider the following 394-residue polypeptide: A-type flagellin (394 aa).

This sequence belongs to the bacterial flagellin family. Phosphorylated on tyrosine residue(s). In terms of processing, flagellin from strain 5939 but not from strain 170018 is glycosylated.

It localises to the secreted. The protein localises to the bacterial flagellum. Its function is as follows. Flagellin is the subunit protein which polymerizes to form the filaments of bacterial flagella. In Pseudomonas aeruginosa, this protein is A-type flagellin (fliC).